We begin with the raw amino-acid sequence, 322 residues long: N-acetyl-gamma-glutamyl-phosphate reductase 2 (322 aa).

The active site involves Cys117.

The protein belongs to the NAGSA dehydrogenase family. Type 2 subfamily.

It localises to the cytoplasm. It catalyses the reaction N-acetyl-L-glutamate 5-semialdehyde + phosphate + NADP(+) = N-acetyl-L-glutamyl 5-phosphate + NADPH + H(+). It participates in amino-acid biosynthesis; L-arginine biosynthesis; N(2)-acetyl-L-ornithine from L-glutamate: step 3/4. Its function is as follows. Catalyzes the NADPH-dependent reduction of N-acetyl-5-glutamyl phosphate to yield N-acetyl-L-glutamate 5-semialdehyde. In Nostoc sp. (strain PCC 7120 / SAG 25.82 / UTEX 2576), this protein is N-acetyl-gamma-glutamyl-phosphate reductase 2.